The sequence spans 223 residues: MPGCRISACGPGAQEGTAEPGSPPPPPREPLPSLQPPSPSPTSTPTPTKSPPLPEAAETPVEGQELQRWRQGASGGSGGAGPAGIAGAAAGAGGRALELAEARRRLLEVEGRRRLVSELESRVLQLHRVFLAAELRLAHRAESLSRLSGGVAQAELYLAAHGSRLKKGARRGRRGRPPALLASALGLGSCVPWGAGRLRRGQGPEPDSPFRRSPPRGPASPQR.

2 disordered regions span residues 1–84 (MPGC…GPAG) and 196–223 (GRLR…SPQR). Residues 21-54 (GSPPPPPREPLPSLQPPSPSPTSTPTPTKSPPLP) are compositionally biased toward pro residues. Residues 73–84 (ASGGSGGAGPAG) are compositionally biased toward gly residues.

In terms of assembly, interacts with TMF1; may regulate TRNP1 proteasomal degradation. Post-translationally, ubiquitinated, leading to its degradation by the proteasome. As to expression, expressed in brain and kidney (at protein level). Also detected in spleen and intestine.

Its subcellular location is the nucleus. Functionally, DNA-binding factor that regulates the expression of a subset of genes and plays a key role in tangential, radial, and lateral expansion of the brain neocortex. Regulates neural stem cells proliferation and the production of intermediate neural progenitors and basal radial glial cells affecting the process of cerebral cortex gyrification. May control the proliferation rate of cells by regulating their progression through key cell-cycle transition points. The sequence is that of TMF-regulated nuclear protein 1 (Trnp1) from Mus musculus (Mouse).